Reading from the N-terminus, the 301-residue chain is tRNA-cytidine(32) 2-sulfurtransferase (301 aa).

The PP-loop motif signature appears at 55–60 (SGGKDS). [4Fe-4S] cluster contacts are provided by cysteine 130, cysteine 133, and cysteine 221.

It belongs to the TtcA family. As to quaternary structure, homodimer. Requires Mg(2+) as cofactor. [4Fe-4S] cluster serves as cofactor.

Its subcellular location is the cytoplasm. It catalyses the reaction cytidine(32) in tRNA + S-sulfanyl-L-cysteinyl-[cysteine desulfurase] + AH2 + ATP = 2-thiocytidine(32) in tRNA + L-cysteinyl-[cysteine desulfurase] + A + AMP + diphosphate + H(+). Its pathway is tRNA modification. Its function is as follows. Catalyzes the ATP-dependent 2-thiolation of cytidine in position 32 of tRNA, to form 2-thiocytidine (s(2)C32). The sulfur atoms are provided by the cysteine/cysteine desulfurase (IscS) system. In Acinetobacter baumannii (strain SDF), this protein is tRNA-cytidine(32) 2-sulfurtransferase.